Consider the following 183-residue polypeptide: Nucleosome assembly protein 1-like 5 (183 aa).

The tract at residues 1–71 is disordered; the sequence is MADSENQGPA…APKPKNDFIE (71 aa). Low complexity-rich tracts occupy residues 7 to 21 and 28 to 49; these read QGPA…AAEA and AEGG…SAAG. Residues 81–107 adopt a coiled-coil conformation; it reads VLALKKLQKRCDKIEAKFDKEFQALEK. A compositionally biased stretch (acidic residues) spans 135–161; it reads EGEEEEEEEYEDDEEEGEEEEEEEEAA. A disordered region spans residues 135–183; the sequence is EGEEEEEEEYEDDEEEGEEEEEEEEAAAEAAAGAKHDDAHAEMPDDAKK. Basic and acidic residues predominate over residues 168–183; the sequence is AKHDDAHAEMPDDAKK.

Belongs to the nucleosome assembly protein (NAP) family.

The protein resides in the nucleus. This Pongo abelii (Sumatran orangutan) protein is Nucleosome assembly protein 1-like 5 (NAP1L5).